A 199-amino-acid polypeptide reads, in one-letter code: N-(5'-phosphoribosyl)anthranilate isomerase (199 aa).

It belongs to the TrpF family.

It catalyses the reaction N-(5-phospho-beta-D-ribosyl)anthranilate = 1-(2-carboxyphenylamino)-1-deoxy-D-ribulose 5-phosphate. It functions in the pathway amino-acid biosynthesis; L-tryptophan biosynthesis; L-tryptophan from chorismate: step 3/5. The sequence is that of N-(5'-phosphoribosyl)anthranilate isomerase from Lacticaseibacillus casei (strain BL23) (Lactobacillus casei).